The following is a 357-amino-acid chain: uncharacterized protein (357 aa).

Residues 120-145 (SSSTVNHDQPAEQPSDKSTDDSTGYP) form a disordered region.

This is an uncharacterized protein from Caenorhabditis elegans.